The primary structure comprises 471 residues: uncharacterized protein (471 aa).

A disordered region spans residues 13–57 (KGGATIGATPMESDSSVSALSGSSASKVSRRGRRRSHLASKSSAP). Over residues 27–39 (SSVSALSGSSASK) the composition is skewed to low complexity. The segment covering 40–50 (VSRRGRRRSHL) has biased composition (basic residues). 2 CCHC-type zinc fingers span residues 397–414 (YACHRCVGFDHKVSECRQ) and 417–434 (SVCRQCGQQGHTAAKCQN). The segment at 438–457 (CRNCRHRGQPSGHYMLSNAC) is gag-like cysteine motif.

It to corresponding ORF of B.mori (R1BM).

This is an uncharacterized protein from Drosophila melanogaster (Fruit fly).